The sequence spans 129 residues: Ig kappa chain V-IV region S107B (129 aa).

The signal sequence occupies residues 1–22; the sequence is MDLQVQIIXFLLISVTVIMSRG. The interval 23-45 is framework-1; that stretch reads ENVLTQSPAIMAASLGQKVTMTC. Residues cysteine 45 and cysteine 111 are joined by a disulfide bond. The segment at 46 to 57 is complementarity-determining-1; that stretch reads SASSSVSSSYLH. The segment at 58-72 is framework-2; that stretch reads WYQQKSGASPKPLIH. The tract at residues 73–79 is complementarity-determining-2; the sequence is RTSNLAS. Residues 80 to 111 form a framework-3 region; that stretch reads GVPARFSGSGSGTSYSLTISSVEAEDDATYYC. The segment at 112-118 is complementarity-determining-3; it reads QQWSGYP. The interval 119–128 is framework-4; it reads FGSGTKLEIK.

This chain is Ig kappa chain V-IV region S107B, found in Mus musculus (Mouse).